Here is a 101-residue protein sequence, read N- to C-terminus: Urease subunit beta (101 aa).

It belongs to the urease beta subunit family. As to quaternary structure, heterotrimer of UreA (gamma), UreB (beta) and UreC (alpha) subunits. Three heterotrimers associate to form the active enzyme.

The protein localises to the cytoplasm. It carries out the reaction urea + 2 H2O + H(+) = hydrogencarbonate + 2 NH4(+). It functions in the pathway nitrogen metabolism; urea degradation; CO(2) and NH(3) from urea (urease route): step 1/1. The sequence is that of Urease subunit beta from Pseudomonas syringae pv. syringae (strain B728a).